The chain runs to 139 residues: von Hippel-Lindau-like protein (139 aa).

Residues 1–22 form a disordered region; that stretch reads MPWRAGNGVGLEAQAGTQEAGP. A beta-domain region spans residues 54–135; the sequence is SRIIICNHSP…GQPVFANITL (82 aa).

This sequence belongs to the VHL family. Interacts via the beta domain with the ODD domain of HIF1A. This interaction is independent of prolyl hydroxylation of HIF1A. As to expression, abundantly expressed in the placenta.

Functions as a dominant-negative VHL to serve as a protector of HIFalpha. This Homo sapiens (Human) protein is von Hippel-Lindau-like protein (VHLL).